We begin with the raw amino-acid sequence, 252 residues long: HTH-type transcriptional regulator XynR (252 aa).

In terms of domain architecture, HTH iclR-type spans isoleucine 4–methionine 66. A DNA-binding region (H-T-H motif) is located at residues lysine 25–lysine 45. The IclR-ED domain maps to isoleucine 81–tyrosine 250.

Activity may be controlled by xylonate. Its function is as follows. Involved in regulation of xylonate catabolism. Represses the expression of both yagA and yagEF operons. Binds mainly at a single site within the spacer of the bidirectional transcription units yagA and yagEF. The chain is HTH-type transcriptional regulator XynR from Escherichia coli (strain K12).